The primary structure comprises 76 residues: Conotoxin VnMEKL-0111 (76 aa).

The N-terminal stretch at 1-18 (MKLTILFLVAAVLMSTQA) is a signal peptide. Positions 19–45 (LIQHDGEKSQKAKMKFLTARTLSAKTR) are excised as a propeptide. 3 cysteine pairs are disulfide-bonded: cysteine 49–cysteine 65, cysteine 56–cysteine 70, and cysteine 64–cysteine 74.

It belongs to the conotoxin O2 superfamily. Expressed by the venom duct.

The protein resides in the secreted. This chain is Conotoxin VnMEKL-0111, found in Conus ventricosus (Mediterranean cone).